A 242-amino-acid chain; its full sequence is Biosynthetic peptidoglycan transglycosylase (242 aa).

A helical membrane pass occupies residues 12-31 (LLFWLMLASALLVLALRWLP).

It belongs to the glycosyltransferase 51 family.

It is found in the cell inner membrane. It carries out the reaction [GlcNAc-(1-&gt;4)-Mur2Ac(oyl-L-Ala-gamma-D-Glu-L-Lys-D-Ala-D-Ala)](n)-di-trans,octa-cis-undecaprenyl diphosphate + beta-D-GlcNAc-(1-&gt;4)-Mur2Ac(oyl-L-Ala-gamma-D-Glu-L-Lys-D-Ala-D-Ala)-di-trans,octa-cis-undecaprenyl diphosphate = [GlcNAc-(1-&gt;4)-Mur2Ac(oyl-L-Ala-gamma-D-Glu-L-Lys-D-Ala-D-Ala)](n+1)-di-trans,octa-cis-undecaprenyl diphosphate + di-trans,octa-cis-undecaprenyl diphosphate + H(+). It functions in the pathway cell wall biogenesis; peptidoglycan biosynthesis. Functionally, peptidoglycan polymerase that catalyzes glycan chain elongation from lipid-linked precursors. The sequence is that of Biosynthetic peptidoglycan transglycosylase from Ectopseudomonas mendocina (strain ymp) (Pseudomonas mendocina).